A 228-amino-acid chain; its full sequence is Urease accessory protein UreF (228 aa).

The protein belongs to the UreF family. UreD, UreF and UreG form a complex that acts as a GTP-hydrolysis-dependent molecular chaperone, activating the urease apoprotein by helping to assemble the nickel containing metallocenter of UreC. The UreE protein probably delivers the nickel.

The protein resides in the cytoplasm. Functionally, required for maturation of urease via the functional incorporation of the urease nickel metallocenter. The protein is Urease accessory protein UreF of Prochlorococcus marinus (strain AS9601).